The chain runs to 1980 residues: Sodium channel protein type 8 subunit alpha (1980 aa).

Disordered stretches follow at residues 1–20 (MAAR…FTPE) and 28–62 (RIAE…LEAG). At 1 to 132 (MAARLLAPPG…RIAIKILIHS (132 aa)) the chain is on the cytoplasmic side. Residues 28 to 61 (RIAESKLKKPPKADGSHREDDEDSKPKPNSDLEA) are compositionally biased toward basic and acidic residues. One copy of the I repeat lies at 114-442 (ILSPFNLIRR…KAMLEQLKKQ (329 aa)). Residues 133-151 (VFSMIIMCTILTNCVFMTF) traverse the membrane as a helical segment. The Extracellular segment spans residues 152–158 (SNPPDWS). The helical transmembrane segment at 159-179 (KNVEYTFTGIYTFESLVKIIA) threads the bilayer. Residues 180 to 193 (RGFCIDGFTFLRDP) are Cytoplasmic-facing. Residues 194 to 211 (WNWLDFSVIMMAYITEFV) form a helical membrane-spanning segment. Residues 212 to 217 (NLGNVS) are Extracellular-facing. Residue asparagine 215 is glycosylated (N-linked (GlcNAc...) asparagine). A helical transmembrane segment spans residues 218 to 234 (ALRTFRVLRALKTISVI). Residues 235–253 (PGLKTIVGALIQSVKKLSD) are Cytoplasmic-facing. The helical transmembrane segment at 254–273 (VMILTVFCLSVFALIGLQLF) threads the bilayer. At 274–355 (MGNLRNKCVV…PNYGYTSFDT (82 aa)) the chain is on the extracellular side. Cysteine 281 and cysteine 333 are disulfide-bonded. N-linked (GlcNAc...) asparagine glycosylation is found at asparagine 289, asparagine 295, and asparagine 308. A glycan (N-linked (GlcNAc...) (high mannose) asparagine) is linked at asparagine 326. Residues 356–380 (FSWAFLALFRLMTQDYWENLYQLTL) constitute an intramembrane region (pore-forming). Glutamate 373 is a Na(+) binding site. Residues 381–387 (RAAGKTY) lie on the Extracellular side of the membrane. The chain crosses the membrane as a helical span at residues 388-408 (MIFFVLVIFVGSFYLVNLILA). At 409-753 (VVAMAYEEQN…EIVNLIVMDP (345 aa)) the chain is on the cytoplasmic side. Disordered regions lie at residues 446 to 530 (AQAA…KAFR) and 568 to 602 (FRGP…DSLF). Low complexity predominate over residues 474 to 486 (PRSSSEISKLSSK). Positions 489 to 500 (KERRNRRKKRKQ) are enriched in basic residues. 2 stretches are compositionally biased toward basic and acidic residues: residues 501–530 (KELS…KAFR) and 586–602 (DEHS…DSLF). Serine 518 and serine 520 each carry phosphoserine. Residues 735–1007 (CHPYWIKLKE…QISVIRIKKG (273 aa)) form an II repeat. Residues 754 to 772 (FVDLAITICIVLNTLFMAM) form a helical membrane-spanning segment. Topologically, residues 773–783 (EHHPMTPQFEH) are extracellular. The chain crosses the membrane as a helical span at residues 784 to 803 (VLAVGNLVFTGIFTAEMFLK). Over 804–817 (LIAMDPYYYFQEGW) the chain is Cytoplasmic. A helical membrane pass occupies residues 818–837 (NIFDGFIVSLSLMELSLADV). Topologically, residues 838 to 839 (EG) are extracellular. The chain crosses the membrane as a helical span at residues 840 to 857 (LSVLRSFRLLRVFKLAKS). The Cytoplasmic portion of the chain corresponds to 858 to 873 (WPTLNMLIKIIGNSVG). A helical transmembrane segment spans residues 874 to 892 (ALGNLTLVLAIIVFIFAVV). The Extracellular segment spans residues 893–921 (GMQLFGKSYKECVCKINQDCELPRWHMHD). Cysteines 906 and 912 form a disulfide. The segment at residues 922 to 942 (FFHSFLIVFRVLCGEWIETMW) is an intramembrane region (pore-forming). Residues glutamate 936 and glutamate 939 each coordinate Na(+). The Extracellular portion of the chain corresponds to 943–955 (DCMEVAGQAMCLI). Cysteine 944 and cysteine 953 are joined by a disulfide. Residues 956-976 (VFMMVMVIGNLVVLNLFLALL) form a helical membrane-spanning segment. Residues 977-1199 (LSSFSADNLA…TCFLIVEHNW (223 aa)) lie on the Cytoplasmic side of the membrane. The interval 1107 to 1148 (NLNTEDVSSESDPEGSKDKLDDTSSSEGSTIDIKPEVEEVPV) is disordered. An III repeat occupies 1180–1495 (LGKSWWILRK…KKYYNAMKKL (316 aa)). Residues 1200 to 1217 (FETFIIFMILLSSGALAF) form a helical membrane-spanning segment. The Extracellular segment spans residues 1218–1230 (EDIYIEQRKTIRT). Residues 1231 to 1249 (ILEYADKVFTYIFILEMLL) traverse the membrane as a helical segment. Over 1250-1263 (KWTAYGFVKFFTNA) the chain is Cytoplasmic. The helical transmembrane segment at 1264 to 1282 (WCWLDFLIVAVSLVSLIAN) threads the bilayer. Over 1283 to 1290 (ALGYSELG) the chain is Extracellular. A helical transmembrane segment spans residues 1291-1309 (AIKSLRTLRALRPLRALSR). Topologically, residues 1310 to 1326 (FEGMRVVVNALVGAIPS) are cytoplasmic. A helical transmembrane segment spans residues 1327–1346 (IMNVLLVCLIFWLIFSIMGV). Residues 1347 to 1399 (NLFAGKYHYCFNETSEIRFEIEDVNNKTECEKLMEGNNTEIRWKNVKINFDNV) are Extracellular-facing. Cysteines 1356 and 1376 form a disulfide. 3 N-linked (GlcNAc...) asparagine glycosylation sites follow: asparagine 1358, asparagine 1372, and asparagine 1383. An intramembrane region (pore-forming) is located at residues 1400 to 1421 (GAGYLALLQVATFKGWMDIMYA). The Extracellular portion of the chain corresponds to 1422 to 1438 (AVDSRKPDEQPKYEDNI). A helical membrane pass occupies residues 1439–1460 (YMYIYFVIFIIFGSFFTLNLFI). The Cytoplasmic segment spans residues 1461–1523 (GVIIDNFNQQ…IVFDFVTQQA (63 aa)). Serine 1497 carries the post-translational modification Phosphoserine; by PKC. Residues 1504 to 1801 (IPRPLNKIQG…WEKFDPDATQ (298 aa)) form an IV repeat. A helical membrane pass occupies residues 1524-1541 (FDIVIMMLICLNMVTMMV). The Extracellular portion of the chain corresponds to 1542–1552 (ETDTQSKQMEN). Residues 1553–1571 (ILYWINLVFVIFFTCECVL) traverse the membrane as a helical segment. Residues 1572–1583 (KMFALRHYYFTI) are Cytoplasmic-facing. A helical transmembrane segment spans residues 1584–1601 (GWNIFDFVVVILSIVGMF). Residues 1602–1614 (LADIIEKYFVSPT) are Extracellular-facing. Residues 1615–1631 (LFRVIRLARIGRILRLI) form a helical membrane-spanning segment. The Cytoplasmic portion of the chain corresponds to 1632–1650 (KGAKGIRTLLFALMMSLPA). The chain crosses the membrane as a helical span at residues 1651 to 1668 (LFNIGLLLFLVMFIFSIF). Topologically, residues 1669–1690 (GMSNFAYVKHEAGIDDMFNFET) are extracellular. Residues 1691 to 1713 (FGNSMICLFQITTSAGWDGLLLP) constitute an intramembrane region (pore-forming). The Extracellular segment spans residues 1714–1742 (ILNRPPDCSLDKEHPGSGFKGDCGNPSVG). Cysteines 1721 and 1736 form a disulfide. The helical transmembrane segment at 1743-1765 (IFFFVSYIIISFLIVVNMYIAII) threads the bilayer. Over 1766–1980 (LENFSVATEE…RQKEVRESKC (215 aa)) the chain is Cytoplasmic. Residues 1895 to 1924 (EEVSAVVLQRAYRGHLARRGFICKKTTSNK) enclose the IQ domain. Residues 1922–1980 (SNKLENGGTHREKKESTPSTASLPSYDSVTKPEKEKQQRAEEGRRERAKRQKEVRESKC) form a disordered region. Over residues 1938–1949 (TPSTASLPSYDS) the composition is skewed to polar residues. The segment covering 1951-1980 (TKPEKEKQQRAEEGRRERAKRQKEVRESKC) has biased composition (basic and acidic residues).

This sequence belongs to the sodium channel (TC 1.A.1.10) family. Nav1.6/SCN8A subfamily. As to quaternary structure, the voltage-sensitive sodium channel consists of an ion-conducting pore-forming alpha subunit regulated by one or more beta-1 (SCN1B), beta-2 (SCN2B), beta-3 (SCN3B) and/or beta-4 (SCN4B) subunits. Beta-1 (SCN1B) and beta-3 (SCN3B) are non-covalently associated with alpha, while beta-2 (SCN2B) and beta-4 (SCN4B) are covalently linked by disulfide bonds. Interacts with NEDD4 and NEDD4L. Interacts with FGF13. Interacts with FGF14, GBG3, GBB2 and SCN1B. Interacts with TMEM233. Interacts with the conotoxin GVIIJ. Interacts with the spider beta/delta-theraphotoxin-Pre1a. Interacts with CALM1; the interaction modulates the inactivation rate of SCN8A. In terms of processing, may be ubiquitinated by NEDD4L; which would promote its endocytosis. Post-translationally, phosphorylation at Ser-1497 by PKC in a highly conserved cytoplasmic loop slows inactivation of the sodium channel and reduces peak sodium currents. As to expression, expressed in the hippocampus with increased expression in epileptic tissue compared to normal adjacent tissue (at protein level). In terms of tissue distribution, expressed in non-neuronal tissues, such as monocytes/macrophages.

The protein localises to the cell membrane. It localises to the cell projection. The protein resides in the axon. It is found in the cytoplasmic vesicle. Its subcellular location is the podosome. It catalyses the reaction Na(+)(in) = Na(+)(out). With respect to regulation, inhibited by tetrodotoxin and, more weakly, by its metabolite 4,9-ah-tetrodotoxin. Pore-forming subunit of a voltage-gated sodium channel complex assuming opened or closed conformations in response to the voltage difference across membranes and through which sodium ions selectively pass along their electrochemical gradient. Contributes to neuronal excitability by regulating action potential threshold and propagation. Functionally, more specifically expressed in non-neuronal cells, could play a role in sodium release from intracellular compartments and participate in the control of podosomes formation and macrophages adhesion and movement. This is Sodium channel protein type 8 subunit alpha from Homo sapiens (Human).